The chain runs to 608 residues: Isocitrate dehydrogenase kinase/phosphatase (608 aa).

ATP is bound by residues 327 to 333 (APGIKGL) and K348. D383 is a catalytic residue.

This sequence belongs to the AceK family.

The protein resides in the cytoplasm. The enzyme catalyses L-seryl-[isocitrate dehydrogenase] + ATP = O-phospho-L-seryl-[isocitrate dehydrogenase] + ADP + H(+). Its function is as follows. Bifunctional enzyme which can phosphorylate or dephosphorylate isocitrate dehydrogenase (IDH) on a specific serine residue. This is a regulatory mechanism which enables bacteria to bypass the Krebs cycle via the glyoxylate shunt in response to the source of carbon. When bacteria are grown on glucose, IDH is fully active and unphosphorylated, but when grown on acetate or ethanol, the activity of IDH declines drastically concomitant with its phosphorylation. The chain is Isocitrate dehydrogenase kinase/phosphatase from Burkholderia ambifaria (strain ATCC BAA-244 / DSM 16087 / CCUG 44356 / LMG 19182 / AMMD) (Burkholderia cepacia (strain AMMD)).